The chain runs to 479 residues: Adenosylhomocysteinase (479 aa).

Residues Thr-66, Asp-142, and Glu-203 each coordinate substrate. 204 to 206 lines the NAD(+) pocket; it reads TTT. Lys-233 and Asp-237 together coordinate substrate. NAD(+) contacts are provided by residues Asn-238, 267–272, Glu-290, Asn-325, 346–348, and Asn-394; these read GYGDVG and IGH.

Belongs to the adenosylhomocysteinase family. The cofactor is NAD(+).

The protein resides in the cytoplasm. It catalyses the reaction S-adenosyl-L-homocysteine + H2O = L-homocysteine + adenosine. It functions in the pathway amino-acid biosynthesis; L-homocysteine biosynthesis; L-homocysteine from S-adenosyl-L-homocysteine: step 1/1. May play a key role in the regulation of the intracellular concentration of adenosylhomocysteine. This is Adenosylhomocysteinase from Nitratidesulfovibrio vulgaris (strain DSM 19637 / Miyazaki F) (Desulfovibrio vulgaris).